The chain runs to 929 residues: LPS-assembly protein LptD (929 aa).

The first 33 residues, 1–33 (MAVKSLVFRRKFPLLVTGSLLALQPVAALTVQA), serve as a signal peptide directing secretion. A disordered region spans residues 58–101 (NLPPRPAHTATSVSTAAAGSSVSGSGGETVEAEPTQRLVTESGG). The segment covering 66 to 90 (TATSVSTAAAGSSVSGSGGETVEAE) has biased composition (low complexity).

The protein belongs to the LptD family. As to quaternary structure, component of the lipopolysaccharide transport and assembly complex. Interacts with LptE and LptA.

The protein localises to the cell outer membrane. Its function is as follows. Together with LptE, is involved in the assembly of lipopolysaccharide (LPS) at the surface of the outer membrane. The polypeptide is LPS-assembly protein LptD (Pseudomonas aeruginosa (strain LESB58)).